Here is a 208-residue protein sequence, read N- to C-terminus: Probable GTP-binding protein EngB (208 aa).

The region spanning 23–205 (LTSEMVVLGR…RQTLLKHLLT (183 aa)) is the EngB-type G domain. Residues 31 to 38 (GRSNVGKS), 57 to 61 (GKTRL), 84 to 87 (DLPG), 154 to 157 (TKFD), and 182 to 184 (FNA) contribute to the GTP site. Serine 38 and threonine 59 together coordinate Mg(2+).

This sequence belongs to the TRAFAC class TrmE-Era-EngA-EngB-Septin-like GTPase superfamily. EngB GTPase family. Requires Mg(2+) as cofactor.

Functionally, necessary for normal cell division and for the maintenance of normal septation. In Helicobacter pylori (strain ATCC 700392 / 26695) (Campylobacter pylori), this protein is Probable GTP-binding protein EngB.